The following is a 465-amino-acid chain: 23S rRNA (uracil(1939)-C(5))-methyltransferase RlmD (465 aa).

Positions 1 to 24 (MSEAVPLSTRRASSAGDAPGRAPV) are disordered. A TRAM domain is found at 16-80 (GDAPGRAPVL…PTYEQAQVVD (65 aa)). [4Fe-4S] cluster contacts are provided by cysteine 93, cysteine 99, cysteine 102, and cysteine 181. S-adenosyl-L-methionine-binding residues include glutamine 289, phenylalanine 318, asparagine 323, glutamate 339, asparagine 367, and aspartate 388. The Nucleophile role is filled by cysteine 421.

This sequence belongs to the class I-like SAM-binding methyltransferase superfamily. RNA M5U methyltransferase family. RlmD subfamily.

The enzyme catalyses uridine(1939) in 23S rRNA + S-adenosyl-L-methionine = 5-methyluridine(1939) in 23S rRNA + S-adenosyl-L-homocysteine + H(+). In terms of biological role, catalyzes the formation of 5-methyl-uridine at position 1939 (m5U1939) in 23S rRNA. The chain is 23S rRNA (uracil(1939)-C(5))-methyltransferase RlmD from Burkholderia mallei (strain ATCC 23344).